Reading from the N-terminus, the 405-residue chain is Accessory Sec system protein translocase subunit SecY2 (405 aa).

10 consecutive transmembrane segments (helical) span residues 14-34 (MCTL…LPFV), 65-85 (LFSI…MFSF), 104-124 (MYLT…NLPV), 131-151 (FLVF…LVWL), 156-176 (ATIG…ASLP), 190-210 (LGLL…VVLF), 243-263 (GMPY…LLLL), 285-305 (PLWI…FAFV), 343-363 (FALI…LFVL), and 368-388 (LLKV…LFTI).

This sequence belongs to the SecY/SEC61-alpha family. SecY2 subfamily. As to quaternary structure, component of the accessory SecA2/SecY2 protein translocase complex required to export cell wall proteins. May form heterotrimers with SecE and SecG subunits.

The protein resides in the cell membrane. Its function is as follows. Part of the accessory SecA2/SecY2 system specifically required for export of possible cell wall proteins. The central subunit of a protein translocation channel. The sequence is that of Accessory Sec system protein translocase subunit SecY2 from Streptococcus oralis (strain Uo5).